Reading from the N-terminus, the 341-residue chain is Ketol-acid reductoisomerase (NADP(+)) (341 aa).

A KARI N-terminal Rossmann domain is found at 2 to 181 (AKVYYNGDAN…GAARAGVLET (180 aa)). Residues 25 to 28 (YGSQ), arginine 48, serine 52, and 82 to 85 (DEKQ) each bind NADP(+). Histidine 107 is a catalytic residue. Glycine 133 contributes to the NADP(+) binding site. The KARI C-terminal knotted domain occupies 182-327 (TFKEETETDL…RELRSMMPFV (146 aa)). The Mg(2+) site is built by aspartate 190, glutamate 194, glutamate 226, and glutamate 230. Serine 251 contributes to the substrate binding site.

The protein belongs to the ketol-acid reductoisomerase family. Requires Mg(2+) as cofactor.

The enzyme catalyses (2R)-2,3-dihydroxy-3-methylbutanoate + NADP(+) = (2S)-2-acetolactate + NADPH + H(+). The catalysed reaction is (2R,3R)-2,3-dihydroxy-3-methylpentanoate + NADP(+) = (S)-2-ethyl-2-hydroxy-3-oxobutanoate + NADPH + H(+). The protein operates within amino-acid biosynthesis; L-isoleucine biosynthesis; L-isoleucine from 2-oxobutanoate: step 2/4. It functions in the pathway amino-acid biosynthesis; L-valine biosynthesis; L-valine from pyruvate: step 2/4. Functionally, involved in the biosynthesis of branched-chain amino acids (BCAA). Catalyzes an alkyl-migration followed by a ketol-acid reduction of (S)-2-acetolactate (S2AL) to yield (R)-2,3-dihydroxy-isovalerate. In the isomerase reaction, S2AL is rearranged via a Mg-dependent methyl migration to produce 3-hydroxy-3-methyl-2-ketobutyrate (HMKB). In the reductase reaction, this 2-ketoacid undergoes a metal-dependent reduction by NADPH to yield (R)-2,3-dihydroxy-isovalerate. This Geobacillus thermodenitrificans (strain NG80-2) protein is Ketol-acid reductoisomerase (NADP(+)).